The primary structure comprises 523 residues: Probable 3-ketoacyl-CoA synthase 20 (523 aa).

2 consecutive transmembrane segments (helical) span residues 31–55 (IVAV…AAGG) and 78–96 (ALAV…YAAS). One can recognise an FAE domain in the interval 93–382 (YAASRPRPVY…RFLATVVLKR (290 aa)). Residues C237, H317, H401, H405, and N438 contribute to the active site.

This sequence belongs to the thiolase-like superfamily. Chalcone/stilbene synthases family. Highly expressed in leaf sheaths. Expressed in leaves, flag leaves and panicles.

The protein resides in the membrane. It carries out the reaction a very-long-chain acyl-CoA + malonyl-CoA + H(+) = a very-long-chain 3-oxoacyl-CoA + CO2 + CoA. Its function is as follows. Contributes to fatty acids elongation. Plays a role in controlling leaf anatomy and plant architecture. This is Probable 3-ketoacyl-CoA synthase 20 from Oryza sativa subsp. japonica (Rice).